Reading from the N-terminus, the 617-residue chain is Phosphomethylpyrimidine synthase (617 aa).

Substrate is bound by residues asparagine 230, methionine 259, tyrosine 288, histidine 324, 344–346, 385–388, and glutamate 424; these read SRG and DGLR. Position 428 (histidine 428) interacts with Zn(2+). Tyrosine 451 contributes to the substrate binding site. Histidine 492 contributes to the Zn(2+) binding site. [4Fe-4S] cluster contacts are provided by cysteine 572, cysteine 575, and cysteine 580.

Belongs to the ThiC family. In terms of assembly, homodimer. It depends on [4Fe-4S] cluster as a cofactor.

It carries out the reaction 5-amino-1-(5-phospho-beta-D-ribosyl)imidazole + S-adenosyl-L-methionine = 4-amino-2-methyl-5-(phosphooxymethyl)pyrimidine + CO + 5'-deoxyadenosine + formate + L-methionine + 3 H(+). Its pathway is cofactor biosynthesis; thiamine diphosphate biosynthesis. Its function is as follows. Catalyzes the synthesis of the hydroxymethylpyrimidine phosphate (HMP-P) moiety of thiamine from aminoimidazole ribotide (AIR) in a radical S-adenosyl-L-methionine (SAM)-dependent reaction. This chain is Phosphomethylpyrimidine synthase, found in Paracidovorax citrulli (strain AAC00-1) (Acidovorax citrulli).